The following is a 225-amino-acid chain: Uridylate kinase (225 aa).

Residue 9–10 (GS) coordinates ATP. G44 contributes to the UMP binding site. The ATP site is built by G45 and R49. UMP is bound by residues D66 and 114–120 (THPGHTT). The ATP site is built by T140, N141, Y146, and D149.

This sequence belongs to the UMP kinase family. As to quaternary structure, homohexamer.

The protein resides in the cytoplasm. It catalyses the reaction UMP + ATP = UDP + ADP. Its pathway is pyrimidine metabolism; CTP biosynthesis via de novo pathway; UDP from UMP (UMPK route): step 1/1. With respect to regulation, inhibited by UTP. In terms of biological role, catalyzes the reversible phosphorylation of UMP to UDP. The protein is Uridylate kinase of Thermococcus kodakarensis (strain ATCC BAA-918 / JCM 12380 / KOD1) (Pyrococcus kodakaraensis (strain KOD1)).